The sequence spans 372 residues: Peptidyl-prolyl cis-trans isomerase D (372 aa).

The region spanning 9-175 (FFDISIGGKP…KEVKIEDCGV (167 aa)) is the PPIase cyclophilin-type domain. TPR repeat units lie at residues 220–253 (VEAV…LKQY), 271–304 (VSLF…DNTD), and 309–342 (AKAL…QPHD).

This sequence belongs to the cyclophilin-type PPIase family. PPIase D subfamily.

The protein resides in the cytoplasm. The catalysed reaction is [protein]-peptidylproline (omega=180) = [protein]-peptidylproline (omega=0). PPIases accelerate the folding of proteins. It catalyzes the cis-trans isomerization of proline imidic peptide bonds in oligopeptides. This is Peptidyl-prolyl cis-trans isomerase D (CPR6) from Kluyveromyces lactis (strain ATCC 8585 / CBS 2359 / DSM 70799 / NBRC 1267 / NRRL Y-1140 / WM37) (Yeast).